The following is a 649-amino-acid chain: Acetyl-coenzyme A synthetase (649 aa).

CoA-binding positions include 191–194, Thr311, and Asn335; that span reads RGGR. ATP is bound by residues 387 to 389, 411 to 416, Asp500, and Arg515; these read GEP and DTWWQT. Ser523 is a CoA binding site. Arg526 contributes to the ATP binding site. 3 residues coordinate Mg(2+): Val537, His539, and Ile542. Arg584 provides a ligand contact to CoA. At Lys609 the chain carries N6-acetyllysine.

Belongs to the ATP-dependent AMP-binding enzyme family. Mg(2+) is required as a cofactor. Acetylated. Deacetylation by the SIR2-homolog deacetylase activates the enzyme.

The enzyme catalyses acetate + ATP + CoA = acetyl-CoA + AMP + diphosphate. Functionally, catalyzes the conversion of acetate into acetyl-CoA (AcCoA), an essential intermediate at the junction of anabolic and catabolic pathways. AcsA undergoes a two-step reaction. In the first half reaction, AcsA combines acetate with ATP to form acetyl-adenylate (AcAMP) intermediate. In the second half reaction, it can then transfer the acetyl group from AcAMP to the sulfhydryl group of CoA, forming the product AcCoA. This is Acetyl-coenzyme A synthetase from Psychromonas ingrahamii (strain DSM 17664 / CCUG 51855 / 37).